The sequence spans 265 residues: Glutamate racemase (265 aa).

Residues 13 to 14 (DS) and 45 to 46 (YG) contribute to the substrate site. The Proton donor/acceptor role is filled by Cys-77. 78–79 (NT) is a substrate binding site. Cys-185 functions as the Proton donor/acceptor in the catalytic mechanism. Residue 186-187 (TH) participates in substrate binding.

This sequence belongs to the aspartate/glutamate racemases family.

It catalyses the reaction L-glutamate = D-glutamate. It participates in cell wall biogenesis; peptidoglycan biosynthesis. Its function is as follows. Provides the (R)-glutamate required for cell wall biosynthesis. The sequence is that of Glutamate racemase from Vibrio cholerae serotype O1 (strain ATCC 39315 / El Tor Inaba N16961).